We begin with the raw amino-acid sequence, 106 residues long: uncharacterized protein (106 aa).

4 helical membrane-spanning segments follow: residues 3–23, 29–49, 50–70, and 82–102; these read WFLLVIAGIEEIIAAIAMKYI, KWPIIVMTVGFGLSFYCLSQA, MIVLPAGVAYAVWTGIGSIGV, and FQLSQVISLCLILAGVIGLRL.

The protein belongs to the drug/metabolite transporter (DMT) superfamily. Small multidrug resistance (SMR) (TC 2.A.7.1) family.

It localises to the cell membrane. This is an uncharacterized protein from Bacillus subtilis (strain 168).